The following is a 159-amino-acid chain: MAVKEVRLYLCPVPPSVALSVGDADADEPMIYFENITECLTDASCDKLACFAELKQEQALFMKKLYKHMVLKSDGAYNKHHVLFDLMVMYKTYVQLADESAFGSNVLHYCEQFITGAFEVFGLGSRVAVLVPPGWENDNLSVLLKHLHGLHLIAIDIVQ.

In Orgyia pseudotsugata (Douglas-fir tussock moth), this protein is P18 protein (P18).